The sequence spans 107 residues: Putative double-stranded DNA mimic protein CGSHiGG_01135 (107 aa).

Belongs to the putative dsDNA mimic protein family.

May act as a double-stranded DNA (dsDNA) mimic. Probably regulates the activity of a dsDNA-binding protein. The chain is Putative double-stranded DNA mimic protein CGSHiGG_01135 from Haemophilus influenzae (strain PittGG).